The following is a 391-amino-acid chain: Ethanol acetyltransferase 1 (391 aa).

Residues 1-24 (MFFTKVLNNQVANGLKQLPVHKRV) constitute a mitochondrion transit peptide. In terms of domain architecture, AB hydrolase-1 spans 48-154 (PIVFVHGIFG…DNSPIEQPHI (107 aa)). Residues Ser121, Asp145, and His295 each act as charge relay system in the active site.

This sequence belongs to the AB hydrolase superfamily.

It localises to the mitochondrion. The catalysed reaction is ethanol + acetyl-CoA = ethyl acetate + CoA. It carries out the reaction acetyl-CoA + H2O = acetate + CoA + H(+). The enzyme catalyses ethyl acetate + H2O = ethanol + acetate + H(+). Its activity is regulated as follows. By ethanol. Thioesterase and esterase reactions are highly repressed in the presence of high ethanol concentrations. Functionally, alcohol acetyltransferase that catalyzes the synthesis of ethyl acetate from ethanol and acetyl-CoA. Can also function as a thioesterase by hydrolyzing acetyl-CoA in the absence of ethanol, as well as esterase hydrolyzing ethyl acetate. The chain is Ethanol acetyltransferase 1 (EAT1) from Wickerhamomyces anomalus (strain ATCC 58044 / CBS 1984 / NCYC 433 / NRRL Y-366-8) (Yeast).